Reading from the N-terminus, the 311-residue chain is Cytosolic Fe-S cluster assembly factor Nubp1 homolog (311 aa).

[4Fe-4S] cluster is bound by residues cysteine 9, cysteine 23, cysteine 26, and cysteine 32. 63–70 (GKGGVGKS) contributes to the ATP binding site. Residues cysteine 240 and cysteine 243 each coordinate [4Fe-4S] cluster.

Belongs to the Mrp/NBP35 ATP-binding proteins family. NUBP1/NBP35 subfamily. Heterotetramer of 2 Nubp1 and 2 Nubp2 chains. [4Fe-4S] cluster serves as cofactor.

It localises to the cytoplasm. Functionally, component of the cytosolic iron-sulfur (Fe/S) protein assembly (CIA) machinery. Required for maturation of extramitochondrial Fe-S proteins. The Nubp1-Nubp2 heterotetramer forms a Fe-S scaffold complex, mediating the de novo assembly of an Fe-S cluster and its transfer to target apoproteins. This is Cytosolic Fe-S cluster assembly factor Nubp1 homolog from Drosophila pseudoobscura pseudoobscura (Fruit fly).